A 264-amino-acid polypeptide reads, in one-letter code: Indole-3-glycerol phosphate synthase (264 aa).

This sequence belongs to the TrpC family.

It carries out the reaction 1-(2-carboxyphenylamino)-1-deoxy-D-ribulose 5-phosphate + H(+) = (1S,2R)-1-C-(indol-3-yl)glycerol 3-phosphate + CO2 + H2O. It functions in the pathway amino-acid biosynthesis; L-tryptophan biosynthesis; L-tryptophan from chorismate: step 4/5. This chain is Indole-3-glycerol phosphate synthase, found in Rhizorhabdus wittichii (strain DSM 6014 / CCUG 31198 / JCM 15750 / NBRC 105917 / EY 4224 / RW1) (Sphingomonas wittichii).